Here is a 43-residue protein sequence, read N- to C-terminus: Protein PsbN (43 aa).

The chain crosses the membrane as a helical span at residues 5–27; the sequence is TLVAISISRLLVSFTGYALYTAF.

This sequence belongs to the PsbN family.

The protein resides in the plastid. It localises to the chloroplast thylakoid membrane. May play a role in photosystem I and II biogenesis. This chain is Protein PsbN, found in Cycas taitungensis (Prince sago).